We begin with the raw amino-acid sequence, 429 residues long: Asparagine--tRNA ligase (429 aa).

It belongs to the class-II aminoacyl-tRNA synthetase family.

The protein localises to the cytoplasm. It catalyses the reaction tRNA(Asn) + L-asparagine + ATP = L-asparaginyl-tRNA(Asn) + AMP + diphosphate + H(+). In Thermoplasma acidophilum (strain ATCC 25905 / DSM 1728 / JCM 9062 / NBRC 15155 / AMRC-C165), this protein is Asparagine--tRNA ligase.